Consider the following 375-residue polypeptide: CCN family member 1 (375 aa).

Positions 1-22 are cleaved as a signal peptide; sequence MGSAGARPALAAALLCLARLAL. The IGFBP N-terminal domain maps to 23 to 94; the sequence is GSPCPAVCQC…AATNGICRAQ (72 aa). 6 disulfide bridges follow: Cys-26-Cys-50, Cys-30-Cys-52, Cys-32-Cys-53, Cys-39-Cys-56, Cys-64-Cys-78, and Cys-70-Cys-91. The region spanning 98 to 164 is the VWFC domain; sequence RPCEYNSKIY…GQCCEEWVCD (67 aa). The TSP type-1 domain maps to 223-268; the sequence is KCIVQTTSWSQCSKTCGTGISTRVTNDNPDCKLIKETRICEVRPCG. Residues 274 to 310 form a heparin-binding region; the sequence is SLKKGKKCTKTKKSPSPVRFTYAGCSSVKKYRPKYCG. Disulfide bonds link Cys-281-Cys-318, Cys-298-Cys-332, Cys-309-Cys-348, Cys-312-Cys-350, and Cys-317-Cys-354. The region spanning 281–355 is the CTCK domain; the sequence is CTKTKKSPSP…QSCRCNYNCP (75 aa).

The protein belongs to the CCN family.

The protein resides in the secreted. In terms of biological role, probable secreted regulatory protein. The chain is CCN family member 1 (CCN1) from Gallus gallus (Chicken).